The chain runs to 371 residues: Cytochrome b (371 aa).

4 helical membrane-spanning segments follow: residues 25–45 (FGSM…FLAV), 69–90 (WMMQ…YIHI), 105–125 (WLSG…XXXX), and 170–190 (XXXX…LHIM). Heme b contacts are provided by histidine 75 and histidine 89. Positions 174 and 188 each coordinate heme b. Histidine 193 lines the a ubiquinone pocket. The next 4 helical transmembrane spans lie at 218–238 (YKDL…VSFL), 280–300 (LGGA…PFTH), 312–332 (IMQL…WAAT), and 339–358 (FTMI…ITNP).

It belongs to the cytochrome b family. In terms of assembly, the cytochrome bc1 complex contains 3 respiratory subunits (MT-CYB, CYC1 and UQCRFS1), 2 core proteins (UQCRC1 and UQCRC2) and probably 6 low-molecular weight proteins. Heme b serves as cofactor.

The protein localises to the mitochondrion inner membrane. Its function is as follows. Component of the ubiquinol-cytochrome c reductase complex (complex III or cytochrome b-c1 complex) that is part of the mitochondrial respiratory chain. The b-c1 complex mediates electron transfer from ubiquinol to cytochrome c. Contributes to the generation of a proton gradient across the mitochondrial membrane that is then used for ATP synthesis. The sequence is that of Cytochrome b (MT-CYB) from Eryx jaculus (Javelin sand boa).